Reading from the N-terminus, the 338-residue chain is MKVFYDKDCDLSIIQGKKVAIIGYGSQGHAQACNLKDSGVDVTVGLRKGSATVAKAEAHGLKVADVATAVAAADLVMILTPDEFQGALYKNEIEPNIKKGATLAFSHGFSIHYNQVVPRADLDVIMIAPKAPGHTVRSEFVKGGGIPDLIAIYQDASGNAKNVALSYASGVGGGRTGIIETTFKDETETDLFGEQAVLCGGTVELVKAGFETLVEAGYAPEMAYFECLHELKLIVDLMYEGGIANMNYSISNNAEYGEYVTGPEVINEESRKAMRNALKRIQDGEYAKMFISEGATNYPSMTAKRRNNAAHGIEIIGEQLRSMMPWISANKIVDKTKN.

The KARI N-terminal Rossmann domain maps to 1–181; it reads MKVFYDKDCD…GGGRTGIIET (181 aa). NADP(+) is bound by residues 24 to 27, R47, S50, T52, and 82 to 85; these read YGSQ and DEFQ. H107 is a catalytic residue. G133 contacts NADP(+). The KARI C-terminal knotted domain occupies 182 to 327; that stretch reads TFKDETETDL…EQLRSMMPWI (146 aa). Residues D190, E194, E226, and E230 each contribute to the Mg(2+) site. Substrate is bound at residue S251.

It belongs to the ketol-acid reductoisomerase family. The cofactor is Mg(2+).

It carries out the reaction (2R)-2,3-dihydroxy-3-methylbutanoate + NADP(+) = (2S)-2-acetolactate + NADPH + H(+). It catalyses the reaction (2R,3R)-2,3-dihydroxy-3-methylpentanoate + NADP(+) = (S)-2-ethyl-2-hydroxy-3-oxobutanoate + NADPH + H(+). It functions in the pathway amino-acid biosynthesis; L-isoleucine biosynthesis; L-isoleucine from 2-oxobutanoate: step 2/4. The protein operates within amino-acid biosynthesis; L-valine biosynthesis; L-valine from pyruvate: step 2/4. Its function is as follows. Involved in the biosynthesis of branched-chain amino acids (BCAA). Catalyzes an alkyl-migration followed by a ketol-acid reduction of (S)-2-acetolactate (S2AL) to yield (R)-2,3-dihydroxy-isovalerate. In the isomerase reaction, S2AL is rearranged via a Mg-dependent methyl migration to produce 3-hydroxy-3-methyl-2-ketobutyrate (HMKB). In the reductase reaction, this 2-ketoacid undergoes a metal-dependent reduction by NADPH to yield (R)-2,3-dihydroxy-isovalerate. The polypeptide is Ketol-acid reductoisomerase (NADP(+)) (Pseudomonas putida (strain ATCC 700007 / DSM 6899 / JCM 31910 / BCRC 17059 / LMG 24140 / F1)).